A 407-amino-acid polypeptide reads, in one-letter code: Peptidase T (407 aa).

Residue H82 coordinates Zn(2+). The active site involves D84. D143 provides a ligand contact to Zn(2+). The active-site Proton acceptor is E177. The Zn(2+) site is built by E178, D200, and H382.

This sequence belongs to the peptidase M20B family. Zn(2+) serves as cofactor.

It is found in the cytoplasm. It carries out the reaction Release of the N-terminal residue from a tripeptide.. Functionally, cleaves the N-terminal amino acid of tripeptides. The chain is Peptidase T from Streptococcus pyogenes serotype M49 (strain NZ131).